The primary structure comprises 453 residues: UDP-N-acetylmuramoylalanine--D-glutamate ligase (453 aa).

Position 119–125 (119–125 (GTNGKTT)) interacts with ATP.

It belongs to the MurCDEF family.

The protein resides in the cytoplasm. It catalyses the reaction UDP-N-acetyl-alpha-D-muramoyl-L-alanine + D-glutamate + ATP = UDP-N-acetyl-alpha-D-muramoyl-L-alanyl-D-glutamate + ADP + phosphate + H(+). It functions in the pathway cell wall biogenesis; peptidoglycan biosynthesis. In terms of biological role, cell wall formation. Catalyzes the addition of glutamate to the nucleotide precursor UDP-N-acetylmuramoyl-L-alanine (UMA). This Syntrophus aciditrophicus (strain SB) protein is UDP-N-acetylmuramoylalanine--D-glutamate ligase.